The primary structure comprises 67 residues: MGEISITKLLVIAALVVLLFGTKKLRTLGGDLGTAIKGFKKAMNDDDATAKRDADSGIQAEKLSHKE.

A helical transmembrane segment spans residues 4 to 21; the sequence is ISITKLLVIAALVVLLFG.

The protein belongs to the TatA/E family. TatE subfamily.

It localises to the cell inner membrane. Part of the twin-arginine translocation (Tat) system that transports large folded proteins containing a characteristic twin-arginine motif in their signal peptide across membranes. TatE shares overlapping functions with TatA. The sequence is that of Probable Sec-independent protein translocase protein TatE from Citrobacter rodentium (strain ICC168) (Citrobacter freundii biotype 4280).